Here is a 1018-residue protein sequence, read N- to C-terminus: Pleckstrin homology domain-containing family M member 2 (1018 aa).

Met-1 is modified (N-acetylmethionine). Residues 1 to 289 (MEPREVKDRI…PDQPDACTEL (289 aa)) are interaction with KIF5B. An RUN domain is found at 36 to 158 (RNHDKVLQRL…IRFDLDLDAP (123 aa)). Disordered regions lie at residues 210 to 367 (SAIA…SSEL), 407 to 440 (TWCS…SEGL), 452 to 520 (ESPS…DSQL), 526 to 545 (EPLV…EPGT), and 555 to 583 (DQPS…THPS). Positions 230–245 (STASDLTSSKTSTKSP) are enriched in low complexity. Residues 258–270 (ETASSDTTPVHTT) are compositionally biased toward polar residues. A compositionally biased stretch (basic residues) spans 294-306 (VTKKKKIGKKKKT). 2 stretches are compositionally biased toward polar residues: residues 316-325 (HPTSSQQKCG) and 347-367 (VLAS…SSEL). Ser-423 is modified (phosphoserine). In terms of domain architecture, PH spans 770 to 872 (TITKEGMLHY…WMQHLCQAVS (103 aa)).

Interacts with KLC2 (via TPR repeats). Interacts with KIF5B. Interacts with BORCS5. Interacts (via RUN domain) with ARL8B (GTP-bound form); PLEKHM1 and PLEKHM2 compete for interaction with ARL8B. Interacts with ARL8A.

Its subcellular location is the cytoplasm. The protein localises to the lysosome membrane. Plays a role in lysosomes movement and localization at the cell periphery acting as an effector of ARL8B. Required for ARL8B to exert its effects on lysosome location, recruits kinesin-1 to lysosomes and hence direct their movement toward microtubule plus ends. Binding to ARL8B provides a link from lysosomal membranes to plus-end-directed motility. Critical factor involved in NK cell-mediated cytotoxicity. Drives the polarization of cytolytic granules and microtubule-organizing centers (MTOCs) toward the immune synapse between effector NK lymphocytes and target cells. Required for maintenance of the Golgi apparatus organization. May play a role in membrane tubulation. In Mus musculus (Mouse), this protein is Pleckstrin homology domain-containing family M member 2.